The sequence spans 136 residues: Protein NrdI (136 aa).

It belongs to the NrdI family.

Functionally, probably involved in ribonucleotide reductase function. The chain is Protein NrdI from Shigella boydii serotype 4 (strain Sb227).